Reading from the N-terminus, the 334-residue chain is Holliday junction branch migration complex subunit RuvB (334 aa).

The tract at residues 1–182 (MNERMVDQSM…FGVHLRLEYY (182 aa)) is large ATPase domain (RuvB-L). Residues L21, R22, G63, K66, T67, T68, 129–131 (EDF), R172, Y182, and R219 each bind ATP. Residue T67 coordinates Mg(2+). The small ATPAse domain (RuvB-S) stretch occupies residues 183–253 (NESDLKEIII…TTKHALGLLQ (71 aa)). The interval 256-334 (QHGLDYIDHK…HFAKSNEERG (79 aa)) is head domain (RuvB-H). DNA contacts are provided by R292, R311, and R316.

This sequence belongs to the RuvB family. As to quaternary structure, homohexamer. Forms an RuvA(8)-RuvB(12)-Holliday junction (HJ) complex. HJ DNA is sandwiched between 2 RuvA tetramers; dsDNA enters through RuvA and exits via RuvB. An RuvB hexamer assembles on each DNA strand where it exits the tetramer. Each RuvB hexamer is contacted by two RuvA subunits (via domain III) on 2 adjacent RuvB subunits; this complex drives branch migration. In the full resolvosome a probable DNA-RuvA(4)-RuvB(12)-RuvC(2) complex forms which resolves the HJ.

It localises to the cytoplasm. The enzyme catalyses ATP + H2O = ADP + phosphate + H(+). Functionally, the RuvA-RuvB-RuvC complex processes Holliday junction (HJ) DNA during genetic recombination and DNA repair, while the RuvA-RuvB complex plays an important role in the rescue of blocked DNA replication forks via replication fork reversal (RFR). RuvA specifically binds to HJ cruciform DNA, conferring on it an open structure. The RuvB hexamer acts as an ATP-dependent pump, pulling dsDNA into and through the RuvAB complex. RuvB forms 2 homohexamers on either side of HJ DNA bound by 1 or 2 RuvA tetramers; 4 subunits per hexamer contact DNA at a time. Coordinated motions by a converter formed by DNA-disengaged RuvB subunits stimulates ATP hydrolysis and nucleotide exchange. Immobilization of the converter enables RuvB to convert the ATP-contained energy into a lever motion, pulling 2 nucleotides of DNA out of the RuvA tetramer per ATP hydrolyzed, thus driving DNA branch migration. The RuvB motors rotate together with the DNA substrate, which together with the progressing nucleotide cycle form the mechanistic basis for DNA recombination by continuous HJ branch migration. Branch migration allows RuvC to scan DNA until it finds its consensus sequence, where it cleaves and resolves cruciform DNA. This is Holliday junction branch migration complex subunit RuvB from Staphylococcus aureus (strain N315).